Consider the following 91-residue polypeptide: Large ribosomal subunit protein uL23 (91 aa).

Belongs to the universal ribosomal protein uL23 family. In terms of assembly, part of the 50S ribosomal subunit. Contacts protein L29, and trigger factor when it is bound to the ribosome.

Its function is as follows. One of the early assembly proteins it binds 23S rRNA. One of the proteins that surrounds the polypeptide exit tunnel on the outside of the ribosome. Forms the main docking site for trigger factor binding to the ribosome. This Staphylococcus aureus (strain USA300) protein is Large ribosomal subunit protein uL23.